Here is a 120-residue protein sequence, read N- to C-terminus: Phosphoribosyl-AMP cyclohydrolase (120 aa).

Asp74 is a binding site for Mg(2+). Residue Cys75 coordinates Zn(2+). Residues Asp76 and Asp78 each coordinate Mg(2+). The Zn(2+) site is built by Cys91 and Cys98.

Belongs to the PRA-CH family. Homodimer. Mg(2+) serves as cofactor. The cofactor is Zn(2+).

It is found in the cytoplasm. The enzyme catalyses 1-(5-phospho-beta-D-ribosyl)-5'-AMP + H2O = 1-(5-phospho-beta-D-ribosyl)-5-[(5-phospho-beta-D-ribosylamino)methylideneamino]imidazole-4-carboxamide. Its pathway is amino-acid biosynthesis; L-histidine biosynthesis; L-histidine from 5-phospho-alpha-D-ribose 1-diphosphate: step 3/9. Functionally, catalyzes the hydrolysis of the adenine ring of phosphoribosyl-AMP. The polypeptide is Phosphoribosyl-AMP cyclohydrolase (Natronomonas pharaonis (strain ATCC 35678 / DSM 2160 / CIP 103997 / JCM 8858 / NBRC 14720 / NCIMB 2260 / Gabara) (Halobacterium pharaonis)).